A 560-amino-acid chain; its full sequence is Membrane protein insertase YidC (560 aa).

6 helical membrane passes run 5 to 25, 334 to 354, 357 to 377, 431 to 451, 476 to 496, and 522 to 542; these read IINL…WQYF, AIDF…MNFF, YVGN…LLMF, LPIL…YVTI, LFGL…WPIL, and FMPL…LIYW.

Belongs to the OXA1/ALB3/YidC family. Type 1 subfamily. In terms of assembly, interacts with the Sec translocase complex via SecD. Specifically interacts with transmembrane segments of nascent integral membrane proteins during membrane integration.

Its subcellular location is the cell inner membrane. Its function is as follows. Required for the insertion and/or proper folding and/or complex formation of integral membrane proteins into the membrane. Involved in integration of membrane proteins that insert both dependently and independently of the Sec translocase complex, as well as at least some lipoproteins. Aids folding of multispanning membrane proteins. This Rickettsia conorii (strain ATCC VR-613 / Malish 7) protein is Membrane protein insertase YidC.